The following is a 450-amino-acid chain: Phosphoglucosamine mutase (450 aa).

The active-site Phosphoserine intermediate is the serine 101. Mg(2+) contacts are provided by serine 101, aspartate 240, aspartate 242, and aspartate 244. Serine 101 is subject to Phosphoserine.

This sequence belongs to the phosphohexose mutase family. It depends on Mg(2+) as a cofactor. Post-translationally, activated by phosphorylation.

The enzyme catalyses alpha-D-glucosamine 1-phosphate = D-glucosamine 6-phosphate. Functionally, catalyzes the conversion of glucosamine-6-phosphate to glucosamine-1-phosphate. The sequence is that of Phosphoglucosamine mutase from Streptococcus agalactiae serotype Ia (strain ATCC 27591 / A909 / CDC SS700).